Consider the following 157-residue polypeptide: Probable calcium-binding protein CML23 (157 aa).

EF-hand domains are found at residues 11-46 (GSME…LSPN), 47-82 (ASQE…SDQS), 86-121 (SAIR…LGEK), and 122-157 (CSIQ…NGSA). The Ca(2+) site is built by Asp-24, Asn-26, Asp-28, Lys-30, Glu-35, Asp-60, Asp-62, Asn-64, Glu-71, Asp-99, Asp-101, Asn-103, Arg-105, Glu-110, Asp-135, Asp-137, Asp-139, Cys-141, and Glu-146.

Functionally, potential calcium sensor. The protein is Probable calcium-binding protein CML23 (CML23) of Arabidopsis thaliana (Mouse-ear cress).